A 957-amino-acid polypeptide reads, in one-letter code: Isoleucine--tRNA ligase (957 aa).

The 'HIGH' region motif lies at 57–67; that stretch reads PYANGDIHIGH. E594 lines the L-isoleucyl-5'-AMP pocket. The 'KMSKS' region motif lies at 635–639; sequence KMSKS. K638 is an ATP binding site. Positions 920, 923, 940, and 943 each coordinate Zn(2+).

Belongs to the class-I aminoacyl-tRNA synthetase family. IleS type 1 subfamily. As to quaternary structure, monomer. Zn(2+) is required as a cofactor.

Its subcellular location is the cytoplasm. The enzyme catalyses tRNA(Ile) + L-isoleucine + ATP = L-isoleucyl-tRNA(Ile) + AMP + diphosphate. Its function is as follows. Catalyzes the attachment of isoleucine to tRNA(Ile). As IleRS can inadvertently accommodate and process structurally similar amino acids such as valine, to avoid such errors it has two additional distinct tRNA(Ile)-dependent editing activities. One activity is designated as 'pretransfer' editing and involves the hydrolysis of activated Val-AMP. The other activity is designated 'posttransfer' editing and involves deacylation of mischarged Val-tRNA(Ile). In Laribacter hongkongensis (strain HLHK9), this protein is Isoleucine--tRNA ligase.